A 448-amino-acid chain; its full sequence is Phosphoglucosamine mutase (448 aa).

The active-site Phosphoserine intermediate is S102. Mg(2+) contacts are provided by S102, D241, D243, and D245. Position 102 is a phosphoserine (S102).

This sequence belongs to the phosphohexose mutase family. The cofactor is Mg(2+). In terms of processing, activated by phosphorylation.

The enzyme catalyses alpha-D-glucosamine 1-phosphate = D-glucosamine 6-phosphate. In terms of biological role, catalyzes the conversion of glucosamine-6-phosphate to glucosamine-1-phosphate. The protein is Phosphoglucosamine mutase of Ruegeria pomeroyi (strain ATCC 700808 / DSM 15171 / DSS-3) (Silicibacter pomeroyi).